A 462-amino-acid chain; its full sequence is Glutamate--tRNA ligase (462 aa).

The 'HIGH' region motif lies at 11–21 (PSPTGFIHLGN). Basic and acidic residues predominate over residues 120–131 (KPRYDGTWRPEP). Residues 120–140 (KPRYDGTWRPEPGKTLPPIPA) are disordered. A 'KMSKS' region motif is present at residues 243-247 (KMSKR). Position 246 (lysine 246) interacts with ATP.

Belongs to the class-I aminoacyl-tRNA synthetase family. Glutamate--tRNA ligase type 1 subfamily. In terms of assembly, monomer.

Its subcellular location is the cytoplasm. It carries out the reaction tRNA(Glu) + L-glutamate + ATP = L-glutamyl-tRNA(Glu) + AMP + diphosphate. Its function is as follows. Catalyzes the attachment of glutamate to tRNA(Glu) in a two-step reaction: glutamate is first activated by ATP to form Glu-AMP and then transferred to the acceptor end of tRNA(Glu). This chain is Glutamate--tRNA ligase, found in Polaromonas sp. (strain JS666 / ATCC BAA-500).